The sequence spans 157 residues: Protein Smg (157 aa).

This sequence belongs to the Smg family.

The sequence is that of Protein Smg from Escherichia coli O7:K1 (strain IAI39 / ExPEC).